The following is a 104-amino-acid chain: uncharacterized protein (104 aa).

The next 2 membrane-spanning stretches (helical) occupy residues 16-36 (LAFF…LASY) and 44-64 (GGFG…FLCI).

The protein localises to the cell membrane. This is an uncharacterized protein from Bacillus anthracis.